The chain runs to 388 residues: Lipid-A-disaccharide synthase (388 aa).

It belongs to the LpxB family.

The catalysed reaction is a lipid X + a UDP-2-N,3-O-bis[(3R)-3-hydroxyacyl]-alpha-D-glucosamine = a lipid A disaccharide + UDP + H(+). It participates in bacterial outer membrane biogenesis; LPS lipid A biosynthesis. Functionally, condensation of UDP-2,3-diacylglucosamine and 2,3-diacylglucosamine-1-phosphate to form lipid A disaccharide, a precursor of lipid A, a phosphorylated glycolipid that anchors the lipopolysaccharide to the outer membrane of the cell. In Burkholderia pseudomallei (strain K96243), this protein is Lipid-A-disaccharide synthase.